We begin with the raw amino-acid sequence, 416 residues long: Gamma-glutamyl phosphate reductase (416 aa).

The protein belongs to the gamma-glutamyl phosphate reductase family.

Its subcellular location is the cytoplasm. It carries out the reaction L-glutamate 5-semialdehyde + phosphate + NADP(+) = L-glutamyl 5-phosphate + NADPH + H(+). It participates in amino-acid biosynthesis; L-proline biosynthesis; L-glutamate 5-semialdehyde from L-glutamate: step 2/2. Functionally, catalyzes the NADPH-dependent reduction of L-glutamate 5-phosphate into L-glutamate 5-semialdehyde and phosphate. The product spontaneously undergoes cyclization to form 1-pyrroline-5-carboxylate. This chain is Gamma-glutamyl phosphate reductase, found in Streptococcus thermophilus (strain CNRZ 1066).